A 109-amino-acid polypeptide reads, in one-letter code: Large ribosomal subunit protein uL18c (109 aa).

It belongs to the universal ribosomal protein uL18 family. Part of the 50S ribosomal subunit; contacts the 5S rRNA.

It localises to the plastid. The protein localises to the chloroplast. Its function is as follows. Binds 5S rRNA, forms part of the central protuberance of the 50S subunit. The polypeptide is Large ribosomal subunit protein uL18c (rpl18) (Cyanidioschyzon merolae (strain NIES-3377 / 10D) (Unicellular red alga)).